The primary structure comprises 241 residues: Large ribosomal subunit protein uL2 (241 aa).

The tract at residues 201 to 241 (VDHPHGGGNRQHPGRPTTVSRHAPPGRKVGSIAAKRTGLKR) is disordered.

The protein belongs to the universal ribosomal protein uL2 family. As to quaternary structure, part of the 50S ribosomal subunit. Forms a bridge to the 30S subunit in the 70S ribosome.

In terms of biological role, one of the primary rRNA binding proteins. Required for association of the 30S and 50S subunits to form the 70S ribosome, for tRNA binding and peptide bond formation. It has been suggested to have peptidyltransferase activity; this is somewhat controversial. Makes several contacts with the 16S rRNA in the 70S ribosome. This Methanobrevibacter smithii (strain ATCC 35061 / DSM 861 / OCM 144 / PS) protein is Large ribosomal subunit protein uL2.